A 513-amino-acid polypeptide reads, in one-letter code: CUGBP Elav-like family member 2 (513 aa).

RRM domains lie at I35–S118, R127–T207, and A428–S506.

It belongs to the CELF/BRUNOL family.

The protein localises to the nucleus. It localises to the cytoplasm. In terms of biological role, RNA-binding protein implicated in the regulation of several post-transcriptional events. May be involved in pre-mRNA alternative splicing, mRNA translation repression and stability. The sequence is that of CUGBP Elav-like family member 2 (celf2) from Xenopus tropicalis (Western clawed frog).